A 927-amino-acid chain; its full sequence is DNA mismatch repair protein MutS (927 aa).

Residue 646 to 653 participates in ATP binding; the sequence is GPNMAGKS. The interval 904 to 927 is disordered; it reads SAQPGSAEQGESPDKHDEGKNSRG. A compositionally biased stretch (basic and acidic residues) spans 915 to 927; sequence SPDKHDEGKNSRG.

It belongs to the DNA mismatch repair MutS family.

In terms of biological role, this protein is involved in the repair of mismatches in DNA. It is possible that it carries out the mismatch recognition step. This protein has a weak ATPase activity. The polypeptide is DNA mismatch repair protein MutS (Desulfovibrio desulfuricans (strain ATCC 27774 / DSM 6949 / MB)).